An 86-amino-acid chain; its full sequence is Large ribosomal subunit protein bL31B (86 aa).

It belongs to the bacterial ribosomal protein bL31 family. Type B subfamily. In terms of assembly, part of the 50S ribosomal subunit.

The protein is Large ribosomal subunit protein bL31B of Yersinia pseudotuberculosis serotype O:1b (strain IP 31758).